A 637-amino-acid polypeptide reads, in one-letter code: tRNA 5-methylaminomethyl-2-thiouridine biosynthesis bifunctional protein MnmC (637 aa).

Residues 1–232 are tRNA (mnm(5)s(2)U34)-methyltransferase; that stretch reads MPERIEWLED…KRDNLQGEFN (232 aa). The interval 255–637 is FAD-dependent cmnm(5)s(2)U34 oxidoreductase; the sequence is IGAGLAGAAV…YGEAKLVSED (383 aa).

In the N-terminal section; belongs to the methyltransferase superfamily. tRNA (mnm(5)s(2)U34)-methyltransferase family. This sequence in the C-terminal section; belongs to the DAO family. FAD serves as cofactor.

The protein localises to the cytoplasm. The catalysed reaction is 5-aminomethyl-2-thiouridine(34) in tRNA + S-adenosyl-L-methionine = 5-methylaminomethyl-2-thiouridine(34) in tRNA + S-adenosyl-L-homocysteine + H(+). Its function is as follows. Catalyzes the last two steps in the biosynthesis of 5-methylaminomethyl-2-thiouridine (mnm(5)s(2)U) at the wobble position (U34) in tRNA. Catalyzes the FAD-dependent demodification of cmnm(5)s(2)U34 to nm(5)s(2)U34, followed by the transfer of a methyl group from S-adenosyl-L-methionine to nm(5)s(2)U34, to form mnm(5)s(2)U34. The chain is tRNA 5-methylaminomethyl-2-thiouridine biosynthesis bifunctional protein MnmC from Polaromonas sp. (strain JS666 / ATCC BAA-500).